We begin with the raw amino-acid sequence, 203 residues long: Sporulation delaying protein C (203 aa).

A signal peptide spans methionine 1–alanine 32. The propeptide at lysine 33–serine 140 is removed in mature form. Cysteine 141 and cysteine 147 are oxidised to a cystine. A propeptide spans serine 183 to glutamine 203 (removed in mature form).

In terms of assembly, proprotein probably interacts with chaperone CsaA. In terms of processing, production of active SDP (able to induce SdpI and kill cells) is a multi-step process that requires signal peptide cleavage (probably by SipS or SipT) as well as SdpA and SdpB. The disulfide bond is not required for maximum toxicity.

It localises to the secreted. Functionally, produces a 42-residue extracellular sporulation delaying protein (SDP) that collapses the proton motive force (probably both the membrane potential and pH gradient) across the cell membrane, which leads to autolysis; may form a proton channel. Induces the lysis of other B.subtilis cells that have not entered the sporulation pathway, inducing cannibalism to provide a source of nutrients to support sporulation, and at the same time delaying commitment to the energetically expensive and irreversible onset of sporulation. Addition of SDP to liquid cultures halts growth, leads to increased cell permeability and eventually cell lysis in a significant subset of the population, although some cells survive and resume growth after a lag period. Effects of SDP are irreversible within 10 minutes. Addition of SDP to solid cultures induces killing, it is much more effective than SKF (AC O31422). Has antibiotic action against Gram-positive Firmicutes (L.acidophilus, M.megaterium, P.polymyxa, S.aureus, S.epidermidis) but not Actinobacteria M.luteus or Gram-negative P.aeruginosa or K.pneumoniae. SDP induces expression of the sdpR-sdpI operon. Its maturation is dependent on SdpA and SdpB. Also functions as a ligand, binds to SdpI triggering a signal transduction cascade that protects the cell against the toxic effects of its own SDP. In Bacillus subtilis (strain 168), this protein is Sporulation delaying protein C.